The chain runs to 208 residues: MTYVLPSLPYSYNSLEPFFDEKTMIIHHTRHHQAYINNTNSILNGTHYENLLIEELISKLNILSIENKLALQNNAGGHINHSLFWKWLKLNTILKDDFKIILEKNFKSVDFFKKQFEKIALSHFGSGWIWLIKKYDNTLRIVTTVNQNTPLMGKEISGISGIPILGLDLWEHAYYLKYKNNRSDYVNAFWNVVNWDEVSYRFFNISNM.

His27, His81, Asp168, and His172 together coordinate Mn(2+).

Belongs to the iron/manganese superoxide dismutase family. As to quaternary structure, homodimer. Mn(2+) is required as a cofactor.

It catalyses the reaction 2 superoxide + 2 H(+) = H2O2 + O2. In terms of biological role, destroys superoxide anion radicals which are normally produced within the cells and which are toxic to biological systems. In Buchnera aphidicola subsp. Baizongia pistaciae (strain Bp), this protein is Superoxide dismutase [Mn] (sodA).